We begin with the raw amino-acid sequence, 133 residues long: Profilin-4 (133 aa).

Cys-13 and Cys-117 form a disulfide bridge. Positions 83–99 match the Involved in PIP2 interaction motif; the sequence is AVIRGKKGSGGITIKKT. A Phosphothreonine modification is found at Thr-113.

It belongs to the profilin family. In terms of assembly, occurs in many kinds of cells as a complex with monomeric actin in a 1:1 ratio. Post-translationally, phosphorylated by MAP kinases.

Its subcellular location is the cytoplasm. The protein localises to the cytoskeleton. In terms of biological role, binds to actin and affects the structure of the cytoskeleton. At high concentrations, profilin prevents the polymerization of actin, whereas it enhances it at low concentrations. The chain is Profilin-4 from Corylus avellana (European hazel).